The primary structure comprises 506 residues: Deoxyribodipyrimidine photo-lyase (506 aa).

The segment covering 1 to 21 has biased composition (pro residues); the sequence is MPPTSVSPPRTAPGPANPSPA. Residues 1–33 form a disordered region; it reads MPPTSVSPPRTAPGPANPSPAHPSRVRVIHPGG. One can recognise a Photolyase/cryptochrome alpha/beta domain in the interval 38–171; the sequence is GPVVYWMLRD…AVHQVDAHNV (134 aa). Residues tyrosine 268 and 282–285 each bind FAD; that span reads SGLS. Serine 312 is subject to Phosphoserine. Residues 319–327, lysine 390, asparagine 421, aspartate 427, and 427–429 contribute to the FAD site; these read ELVVRRELA and DGR. The disordered stretch occupies residues 487–506; that stretch reads KKRNAEESPNPVVKLSKSQH.

Belongs to the DNA photolyase class-2 family. FAD serves as cofactor. In terms of tissue distribution, expressed in proliferating tissues. Highly expressed in roots and shoot apical meristem (SAM). Expressed in leaves, flag leaves, and panicle.

The protein localises to the nucleus. The enzyme catalyses cyclobutadipyrimidine (in DNA) = 2 pyrimidine residues (in DNA).. Involved in repair of UV radiation-induced DNA damage. Catalyzes the light-dependent monomerization (300-600 nm) of cyclobutylpyrimidine dimers (CPDs), which are formed between adjacent bases on the same DNA strand upon exposure to ultraviolet radiation. Required for plant survival in the presence of UV-B light. Not involved in the repair of (6-4) photoproducts. In Oryza sativa subsp. japonica (Rice), this protein is Deoxyribodipyrimidine photo-lyase (PHR).